A 356-amino-acid polypeptide reads, in one-letter code: Hyaluronan and proteoglycan link protein 1 (356 aa).

Positions 1–9 (MRSLLLLVL) are excised as a propeptide. The Ig-like V-type domain occupies 40–154 (PRLLVEAEQA…EGLEDDTAVV (115 aa)). N-linked (GlcNAc...) asparagine glycosylation occurs at asparagine 58. 5 disulfides stabilise this stretch: cysteine 63–cysteine 141, cysteine 183–cysteine 254, cysteine 207–cysteine 228, cysteine 281–cysteine 351, and cysteine 306–cysteine 327. Link domains are found at residues 161 to 256 (VVFP…FCFT) and 261 to 353 (GRFY…YCFR).

It belongs to the HAPLN family. In terms of tissue distribution, ubiquitously expressed.

The protein localises to the secreted. It is found in the extracellular space. It localises to the extracellular matrix. Its function is as follows. Stabilizes the aggregates of proteoglycan monomers with hyaluronic acid in the extracellular cartilage matrix. The sequence is that of Hyaluronan and proteoglycan link protein 1 (Hapln1) from Mus musculus (Mouse).